Reading from the N-terminus, the 441-residue chain is Peroxisomal biogenesis factor 3 (441 aa).

Over 1-17 (MAPNQRSRSLLQRHRGK) the chain is Peroxisomal. The helical transmembrane segment at 18–39 (VLISLTGIAALFTTGSVVVFFV) threads the bilayer. Residues 40-441 (KRWLYKQQLR…GVSSSFSFKP (402 aa)) are Cytoplasmic-facing.

This sequence belongs to the peroxin-3 family. Interacts with MSP1; leading to inhibit the translocase activity of MSP1.

It is found in the peroxisome membrane. Involved in peroxisome biosynthesis. Acts as a regulator of MSP1 by inhibiting the ability of MSP1 to unfold target proteins. The polypeptide is Peroxisomal biogenesis factor 3 (PEX3) (Saccharomyces cerevisiae (strain ATCC 204508 / S288c) (Baker's yeast)).